A 794-amino-acid chain; its full sequence is Protein sel-1 homolog 1 (794 aa).

The N-terminal stretch at 1–21 (MQVRVRLLLLLCAVLLGSAAA) is a signal peptide. Residues 22 to 737 (SSDEETNQDE…DLFTQLDMDQ (716 aa)) form an interaction with ERLEC1, OS9 and SYVN1 region. The Lumenal portion of the chain corresponds to 22 to 738 (SSDEETNQDE…LFTQLDMDQL (717 aa)). Positions 23–32 (SDEETNQDES) are enriched in acidic residues. 2 disordered regions span residues 23-46 (SDEE…GSVK) and 73-105 (QDEE…KTYE). In terms of domain architecture, Fibronectin type-II spans 122-170 (AHGEPCHFPFLFLDKEYDECTSDGREDGRLWCATTYDYKTDEKWGFCET). Intrachain disulfides connect cysteine 127/cysteine 153 and cysteine 141/cysteine 168. 9 Sel1-like repeats span residues 183–218 (AEAI…GMNH), 219–254 (TKAL…EEGS), 255–290 (PKGQ…LGGN), 291–326 (LIAH…NHVA), 373–409 (VQAQ…NAGN), 410–446 (SHAM…DMGN), 447–482 (PVGQ…EQGW), 483–518 (VDGQ…QGGH), and 519–554 (ILAF…ERGR). N-linked (GlcNAc...) asparagine glycosylation is found at asparagine 195 and asparagine 217. An N-linked (GlcNAc...) asparagine glycan is attached at asparagine 272. Positions 352 to 537 (NSGMLEEDLI…MHASGTGVMR (186 aa)) are important for homodimerization and oligomerization. An N-linked (GlcNAc...) asparagine glycan is attached at asparagine 431. N-linked (GlcNAc...) asparagine glycosylation occurs at asparagine 608. Sel1-like repeat units follow at residues 627–662 (TVAR…EQQH) and 664–699 (AQAM…EASP). Residues 643–723 (TDVDYETAFI…VVYFLQYIRE (81 aa)) are interaction with SYVN1. Residues 738-794 (LLGPEWDLYLMTIIALLLGTVIAYRQRQHQDIPVPRPPGPRPAPPQQEGPPEQQPPQ) are mediates retention in the endoplasmic reticulum. A helical transmembrane segment spans residues 739–759 (LGPEWDLYLMTIIALLLGTVI). Residues 760-794 (AYRQRQHQDIPVPRPPGPRPAPPQQEGPPEQQPPQ) lie on the Cytoplasmic side of the membrane. A disordered region spans residues 767–794 (QDIPVPRPPGPRPAPPQQEGPPEQQPPQ). Pro residues predominate over residues 771–794 (VPRPPGPRPAPPQQEGPPEQQPPQ).

The protein belongs to the sel-1 family. As to quaternary structure, homodimer and homooligomer. May form a complex with ERLEC1, HSPA5, OS9, and SYVN1. Interacts with FOXRED2 and EDEM1. Interacts with LPL and LMF1; may stabilize the complex formed by LPL and LMF1 and thereby promote the export of LPL dimers. Component of the HRD1 complex, which comprises at least SYNV1/HRD1, DERL1/2, FAM8A1, HERPUD1/HERP, OS9, SEL1L and UBE2J1. SYNV1 assembles with SEL1L and FAM8A1 through its transmembrane domains, but interaction with its cytoplasmic domain is required to confer stability to FAM8A1 and enhance recruitment of HERPUD1. The interaction with SYNV1/HRD1 is direct. Post-translationally, N-glycosylated.

It localises to the endoplasmic reticulum membrane. Its function is as follows. Plays a role in the endoplasmic reticulum quality control (ERQC) system also called ER-associated degradation (ERAD) involved in ubiquitin-dependent degradation of misfolded endoplasmic reticulum proteins. Enhances SYVN1 stability. Plays a role in LPL maturation and secretion. Required for normal differentiation of the pancreas epithelium, and for normal exocrine function and survival of pancreatic cells. May play a role in Notch signaling. In Rattus norvegicus (Rat), this protein is Protein sel-1 homolog 1 (Sel1l).